A 301-amino-acid chain; its full sequence is MANAVVAIAGSSGLIGSALTAALRAADHTVLRIVRRAPANSEELHWNPESGEFDPHALTDVDAVVNLCGVNIAQRRWSGAFKQSLRDSRITPTEVLSAAVADAGVATLINASAVGYYGNTKDRVVDENDSAGTGFLAQLCVDWETATRPAQQSGARVVLARTGVVLSPAGGMLRRMRPLFSVGLGARLGSGRQYMSWISLEDEVRALQFAIAQPNLSGPVNLTGPAPVTNAEFTTAFGRAVNRPTPLMLPSVAVRAAFGEFADEGLLIGQRAIPSALERAGFQFHHNTIGEALGYATTRPG.

It belongs to the NAD(P)-dependent epimerase/dehydratase family. SDR39U1 subfamily.

The sequence is that of Epimerase family protein Mb2239 from Mycobacterium bovis (strain ATCC BAA-935 / AF2122/97).